A 1309-amino-acid polypeptide reads, in one-letter code: Target of rapamycin complex 2 subunit ste20 (1309 aa).

One can recognise an REM-1 domain in the interval 24–110 (DFIKKMNTTD…IESFQGENGE (87 aa)). The tract at residues 105 to 128 (QGENGEAKTGSTSLTRSASATVSR) is disordered. Residues 113 to 128 (TGSTSLTRSASATVSR) are compositionally biased toward polar residues. Position 151 is a phosphoserine (Ser-151). The tract at residues 183 to 205 (NVNEKNNSSSEDTQPNGKRPSSL) is disordered. The span at 194–205 (DTQPNGKRPSSL) shows a compositional bias: polar residues. 6 helical membrane-spanning segments follow: residues 285 to 305 (LFLD…WILS), 392 to 412 (LIDG…LVYL), 504 to 524 (VIDL…ESFL), 564 to 584 (TAVL…VCMI), 926 to 946 (LNHW…LEVC), and 984 to 1004 (LLLR…INFI). Thr-1203 is subject to Phosphothreonine.

The protein belongs to the RICTOR family. In terms of assembly, the target of rapamycin complex 2 (TORC2) is composed of at least bit61, pop3/wat1, sin1, ste20 and tor1. In terms of processing, either Ser-203 or Ser-204 are phosphorylated as well.

Its subcellular location is the membrane. Functionally, component of TORC2, which regulates multiple cellular processes to control cell growth in response to environmental signals. TORC2 is required for cell survival under various stress conditions. TORC2 positively controls G1 cell-cycle arrest, sexual development and amino acid uptake. Positively regulates amino acid uptake through the control of expression of amino acid permeases. The protein is Target of rapamycin complex 2 subunit ste20 of Schizosaccharomyces pombe (strain 972 / ATCC 24843) (Fission yeast).